Here is a 249-residue protein sequence, read N- to C-terminus: uncharacterized protein (249 aa).

This is an uncharacterized protein from Caenorhabditis elegans.